The primary structure comprises 468 residues: uncharacterized protein (468 aa).

The signal sequence occupies residues 1–27 (MRKWYFILLAGVLTSVILAFVYDKTKA). PbH1 repeat units lie at residues 125–154 (KHDI…YVSG), 156–185 (SSHI…AVYG), 189–214 (MKDI…VLNG), 216–238 (IDGF…DLIG), 249–283 (VRNG…YVDG), 284–305 (GHDI…EATS), 312–334 (ANAI…SIGG), and 397–420 (NEGN…WMWK).

It is found in the secreted. This is an uncharacterized protein from Bacillus subtilis (strain 168).